A 172-amino-acid polypeptide reads, in one-letter code: S-ribosylhomocysteine lyase (172 aa).

Fe cation contacts are provided by H54, H58, and C128.

This sequence belongs to the LuxS family. In terms of assembly, homodimer. It depends on Fe cation as a cofactor.

It carries out the reaction S-(5-deoxy-D-ribos-5-yl)-L-homocysteine = (S)-4,5-dihydroxypentane-2,3-dione + L-homocysteine. Functionally, involved in the synthesis of autoinducer 2 (AI-2) which is secreted by bacteria and is used to communicate both the cell density and the metabolic potential of the environment. The regulation of gene expression in response to changes in cell density is called quorum sensing. Catalyzes the transformation of S-ribosylhomocysteine (RHC) to homocysteine (HC) and 4,5-dihydroxy-2,3-pentadione (DPD). The chain is S-ribosylhomocysteine lyase from Vibrio atlanticus (strain LGP32) (Vibrio splendidus (strain Mel32)).